A 352-amino-acid chain; its full sequence is Homoserine O-acetyltransferase (352 aa).

In terms of domain architecture, AB hydrolase-1 spans 37–330 (NAVLVCHALT…APHGHDTFLI (294 aa)). S133 (nucleophile) is an active-site residue. R206 provides a ligand contact to substrate. Catalysis depends on residues D296 and H325. D326 serves as a coordination point for substrate.

Belongs to the AB hydrolase superfamily. MetX family. In terms of assembly, homodimer.

It is found in the cytoplasm. The catalysed reaction is L-homoserine + acetyl-CoA = O-acetyl-L-homoserine + CoA. It functions in the pathway amino-acid biosynthesis; L-methionine biosynthesis via de novo pathway; O-acetyl-L-homoserine from L-homoserine: step 1/1. Functionally, transfers an acetyl group from acetyl-CoA to L-homoserine, forming acetyl-L-homoserine. The sequence is that of Homoserine O-acetyltransferase from Salinibacter ruber (strain DSM 13855 / M31).